The sequence spans 289 residues: O-methyltransferase asqN (289 aa).

Asp155 contributes to the S-adenosyl-L-methionine binding site. His195 serves as the catalytic Proton acceptor.

The protein belongs to the class I-like SAM-binding methyltransferase superfamily. Cation-independent O-methyltransferase family.

The protein operates within secondary metabolite biosynthesis. It participates in alkaloid biosynthesis. Its pathway is mycotoxin biosynthesis. In terms of biological role, O-methyltransferase; part of the gene cluster that mediates the biosynthesis of the aspoquinolone mycotoxins. The role of asqN within the aspoquinolone pathway has still to be determined. The first step of the pathway is catalyzed by the nonribosomal peptide synthetase asqK that condenses anthranilic acid and O-methyl-L-tyrosine to produce 4'-methoxycyclopeptin. 4'-methoxycyclopeptin is then converted to 4'-methoxydehydrocyclopeptin by the ketoglutarate-dependent dioxygenase asqJ. AsqJ also converts its first product 4'-methoxydehydrocyclopeptin to 4'-methoxycyclopenin. The following conversion of 4'-methoxycyclopenin into 4'-methoxyviridicatin is catalyzed by the cyclopenase asqI. 4'-methoxyviridicatin is the precursor of quinolone natural products, and is further converted to quinolinone B. The prenyltransferase asqH1 then catalyzes the canonical Friedel-Crafts alkylation of quinolinone B with dimethylallyl cation to yield dimethylallyl quinolone, which is subjected to FAD-dependent dehydrogenation by the FAD-linked oxidoreductase asqF to yield conjugated aryl diene. The delta(3') double bond then serves as the site of the second alkylation with DMAPP catalyzed by the prenyltransferase asqH2 to yield a carbenium ion intermediate, which can be attacked by H(2)O to yield a styrenyl quinolone containing a C3'-hydroxyprenyl chain. The FAD-dependent monooxygenase asqG performs epoxidation of the terminal C7'-C8' olefin. Finally, after dehydratation of the epoxide at C3 by asqC, the quinolone epoxide rearrangement protein asqO catalyzes an enzymatic 3-exo-tet cyclization to yield the cyclopropyl-THF ring system in aspoquinolone. In Emericella nidulans (strain FGSC A4 / ATCC 38163 / CBS 112.46 / NRRL 194 / M139) (Aspergillus nidulans), this protein is O-methyltransferase asqN.